Here is a 104-residue protein sequence, read N- to C-terminus: Probable RNA-binding protein PA4753 (104 aa).

Residues 1–97 (MALTQEQKKQ…NPKPNKNLSN (97 aa)) enclose the CRM domain.

The protein is Probable RNA-binding protein PA4753 of Pseudomonas aeruginosa (strain ATCC 15692 / DSM 22644 / CIP 104116 / JCM 14847 / LMG 12228 / 1C / PRS 101 / PAO1).